The chain runs to 453 residues: Glutamyl-tRNA(Gln) amidotransferase subunit A (453 aa).

Active-site charge relay system residues include K53 and S128. Residue S152 is the Acyl-ester intermediate of the active site.

It belongs to the amidase family. GatA subfamily. Heterotrimer of A, B and C subunits.

The catalysed reaction is L-glutamyl-tRNA(Gln) + L-glutamine + ATP + H2O = L-glutaminyl-tRNA(Gln) + L-glutamate + ADP + phosphate + H(+). In terms of biological role, allows the formation of correctly charged Gln-tRNA(Gln) through the transamidation of misacylated Glu-tRNA(Gln) in organisms which lack glutaminyl-tRNA synthetase. The reaction takes place in the presence of glutamine and ATP through an activated gamma-phospho-Glu-tRNA(Gln). This chain is Glutamyl-tRNA(Gln) amidotransferase subunit A, found in Helicobacter pylori (strain G27).